The chain runs to 382 residues: 8-amino-7-oxononanoate synthase (382 aa).

Arg26 provides a ligand contact to substrate. Residue 104 to 105 (GY) participates in pyridoxal 5'-phosphate binding. His129 provides a ligand contact to substrate. Residues Ser175, 200–203 (DEAH), and 232–235 (TLSK) contribute to the pyridoxal 5'-phosphate site. Lys235 is subject to N6-(pyridoxal phosphate)lysine. Residue Thr345 coordinates substrate.

This sequence belongs to the class-II pyridoxal-phosphate-dependent aminotransferase family. BioF subfamily. As to quaternary structure, homodimer. Pyridoxal 5'-phosphate serves as cofactor.

It catalyses the reaction 6-carboxyhexanoyl-[ACP] + L-alanine + H(+) = (8S)-8-amino-7-oxononanoate + holo-[ACP] + CO2. It participates in cofactor biosynthesis; biotin biosynthesis. Its function is as follows. Catalyzes the decarboxylative condensation of pimeloyl-[acyl-carrier protein] and L-alanine to produce 8-amino-7-oxononanoate (AON), [acyl-carrier protein], and carbon dioxide. This chain is 8-amino-7-oxononanoate synthase, found in Mycobacterium sp. (strain KMS).